The following is a 176-amino-acid chain: Neuropeptide-like protein 1 (176 aa).

A signal peptide spans 1-19 (MKATFVLACLLVIAAVSHA). The tract at residues 59–79 (GKRSAEQNEQANKEDKATSDK) is disordered. Basic and acidic residues predominate over residues 61-79 (RSAEQNEQANKEDKATSDK).

Functionally, in AWC olfactory sensory neurons, required for the detection of preferred food sources. This is Neuropeptide-like protein 1 (nlp-1) from Caenorhabditis elegans.